The following is a 358-amino-acid chain: Serine/threonine-protein phosphatase 2A activator 2 (358 aa).

This sequence belongs to the PTPA-type PPIase family.

It localises to the cytoplasm. The enzyme catalyses [protein]-peptidylproline (omega=180) = [protein]-peptidylproline (omega=0). In terms of biological role, PPIases accelerate the folding of proteins. It catalyzes the cis-trans isomerization of proline imidic peptide bonds in oligopeptides. Acts as a regulatory subunit for PP2A-like phosphatases modulating their activity or substrate specificity, probably by inducing a conformational change in the catalytic subunit, a direct target of the PPIase. Can reactivate inactive phosphatase PP2A-phosphatase methylesterase complexes (PP2Ai) in presence of ATP and Mg(2+) by dissociating the inactive form from the complex. The sequence is that of Serine/threonine-protein phosphatase 2A activator 2 (RRD2) from Candida albicans (strain SC5314 / ATCC MYA-2876) (Yeast).